The sequence spans 412 residues: Imidazolonepropionase (412 aa).

Fe(3+) contacts are provided by His76 and His78. Positions 76 and 78 each coordinate Zn(2+). Positions 85, 148, and 181 each coordinate 4-imidazolone-5-propanoate. Tyr148 provides a ligand contact to N-formimidoyl-L-glutamate. A Fe(3+)-binding site is contributed by His242. Position 242 (His242) interacts with Zn(2+). Glu245 contributes to the 4-imidazolone-5-propanoate binding site. Asp317 lines the Fe(3+) pocket. A Zn(2+)-binding site is contributed by Asp317. Residues Asn319 and Gly321 each contribute to the N-formimidoyl-L-glutamate site. 4-imidazolone-5-propanoate is bound at residue Ser322.

This sequence belongs to the metallo-dependent hydrolases superfamily. HutI family. The cofactor is Zn(2+). Fe(3+) is required as a cofactor.

The protein localises to the cytoplasm. The enzyme catalyses 4-imidazolone-5-propanoate + H2O = N-formimidoyl-L-glutamate. Its pathway is amino-acid degradation; L-histidine degradation into L-glutamate; N-formimidoyl-L-glutamate from L-histidine: step 3/3. In terms of biological role, catalyzes the hydrolytic cleavage of the carbon-nitrogen bond in imidazolone-5-propanoate to yield N-formimidoyl-L-glutamate. It is the third step in the universal histidine degradation pathway. The protein is Imidazolonepropionase of Staphylococcus aureus (strain MSSA476).